The chain runs to 239 residues: MSVISMKQLLEAGVHFGHQTRRWNPKMKKYIFVERNGIYIIDLQKTVKKLEEAYDFMRQVGQDGGKVLFVGTKKQAQEAIKDEAERSGNYYINQRWLGGTLTNFGTIQKRVARMKQIEKMEEEGTFEVLPKKEVIQLKKEHERLIKFLGGIRDMHDLPDVMFVVDPRKERIAVAEARKLNIPLVGIVDTNCDPDEIDYVIPANDDAIRAVKLLTAKMADALIESKQGEEEAPAVEAAAE.

The protein belongs to the universal ribosomal protein uS2 family.

The sequence is that of Small ribosomal subunit protein uS2 from Lysinibacillus sphaericus (strain C3-41).